Here is a 418-residue protein sequence, read N- to C-terminus: ADP-ribose glycohydrolase MACROD2 (418 aa).

The 182-residue stretch at 57–238 folds into the Macro domain; it reads PEEIQVKNSL…IYKRKLNEFF (182 aa). Substrate is bound by residues 75–77, 88–90, 95–100, 183–189, and phenylalanine 222; these read GDI, AAN, GGGGVD, and ISTGIYG. Residues 238 to 418 are disordered; the sequence is FPKDGGDDEE…KDTNDDANEA (181 aa). Over residues 250-262 the composition is skewed to basic and acidic residues; the sequence is KGDSDEMKEDTEG. Residues 295–318 show a composition bias toward polar residues; sequence TGNTQDMTAMSLETNEGNDVSSPA. Positions 321–360 are enriched in basic and acidic residues; that stretch reads PLKEGEELSEAKITGEKISVEPKTPEPEDAKMTVEEKSQE. Residues 377–389 are compositionally biased toward acidic residues; the sequence is ETEDLDGDSEEPS.

Belongs to the MacroD-type family. MacroD1/2-like subfamily.

The protein resides in the nucleus. It carries out the reaction 2''-O-acetyl-ADP-D-ribose + H2O = ADP-D-ribose + acetate + H(+). The enzyme catalyses 4-O-(ADP-D-ribosyl)-L-aspartyl-[protein] + H2O = L-aspartyl-[protein] + ADP-D-ribose + H(+). The catalysed reaction is 5-O-(ADP-D-ribosyl)-L-glutamyl-[protein] + H2O = L-glutamyl-[protein] + ADP-D-ribose + H(+). It catalyses the reaction alpha-NAD(+) + H2O = ADP-D-ribose + nicotinamide + H(+). Its activity is regulated as follows. Subject to product inhibition by ADP-ribose. Removes ADP-ribose from aspartate and glutamate residues in proteins bearing a single ADP-ribose moiety. Inactive towards proteins bearing poly-ADP-ribose. Deacetylates O-acetyl-ADP ribose, a signaling molecule generated by the deacetylation of acetylated lysine residues in histones and other proteins. The polypeptide is ADP-ribose glycohydrolase MACROD2 (Xenopus laevis (African clawed frog)).